The primary structure comprises 432 residues: Phosphomethylpyrimidine synthase (432 aa).

Substrate-binding positions include N66, M95, Y124, H163, 185–187 (SRG), 226–229 (DGMR), and E265. H269 is a Zn(2+) binding site. Y292 contributes to the substrate binding site. H333 contributes to the Zn(2+) binding site. [4Fe-4S] cluster-binding residues include C409, C412, and C416.

Belongs to the ThiC family. Requires [4Fe-4S] cluster as cofactor.

The enzyme catalyses 5-amino-1-(5-phospho-beta-D-ribosyl)imidazole + S-adenosyl-L-methionine = 4-amino-2-methyl-5-(phosphooxymethyl)pyrimidine + CO + 5'-deoxyadenosine + formate + L-methionine + 3 H(+). The protein operates within cofactor biosynthesis; thiamine diphosphate biosynthesis. Catalyzes the synthesis of the hydroxymethylpyrimidine phosphate (HMP-P) moiety of thiamine from aminoimidazole ribotide (AIR) in a radical S-adenosyl-L-methionine (SAM)-dependent reaction. The protein is Phosphomethylpyrimidine synthase of Desulforudis audaxviator (strain MP104C).